The chain runs to 180 residues: ATP-dependent protease subunit HslV (180 aa).

Thr-7 is a catalytic residue. Residues Gly-165, Cys-168, and Thr-171 each contribute to the Na(+) site.

The protein belongs to the peptidase T1B family. HslV subfamily. A double ring-shaped homohexamer of HslV is capped on each side by a ring-shaped HslU homohexamer. The assembly of the HslU/HslV complex is dependent on binding of ATP.

The protein resides in the cytoplasm. It carries out the reaction ATP-dependent cleavage of peptide bonds with broad specificity.. With respect to regulation, allosterically activated by HslU binding. In terms of biological role, protease subunit of a proteasome-like degradation complex believed to be a general protein degrading machinery. The protein is ATP-dependent protease subunit HslV of Bacillus cytotoxicus (strain DSM 22905 / CIP 110041 / 391-98 / NVH 391-98).